Here is a 335-residue protein sequence, read N- to C-terminus: Tetraacyldisaccharide 4'-kinase (335 aa).

59–66 (TAGGNGKT) is a binding site for ATP.

It belongs to the LpxK family.

The enzyme catalyses a lipid A disaccharide + ATP = a lipid IVA + ADP + H(+). It participates in glycolipid biosynthesis; lipid IV(A) biosynthesis; lipid IV(A) from (3R)-3-hydroxytetradecanoyl-[acyl-carrier-protein] and UDP-N-acetyl-alpha-D-glucosamine: step 6/6. In terms of biological role, transfers the gamma-phosphate of ATP to the 4'-position of a tetraacyldisaccharide 1-phosphate intermediate (termed DS-1-P) to form tetraacyldisaccharide 1,4'-bis-phosphate (lipid IVA). This Aliivibrio salmonicida (strain LFI1238) (Vibrio salmonicida (strain LFI1238)) protein is Tetraacyldisaccharide 4'-kinase.